The following is a 287-amino-acid chain: mRNA-capping enzyme small subunit (287 aa).

As to quaternary structure, heterodimer of a large and a small subunit.

It localises to the virion. The catalysed reaction is a 5'-end (5'-triphosphoguanosine)-ribonucleoside in mRNA + S-adenosyl-L-methionine = a 5'-end (N(7)-methyl 5'-triphosphoguanosine)-ribonucleoside in mRNA + S-adenosyl-L-homocysteine. Its function is as follows. Catalyzes the last reaction in the mRNA cap formation pathway. The sequence is that of mRNA-capping enzyme small subunit from Erythrocebus patas (Red guenon).